Consider the following 136-residue polypeptide: Prefoldin subunit alpha (136 aa).

Belongs to the prefoldin subunit alpha family. As to quaternary structure, heterohexamer of two alpha and four beta subunits.

Its subcellular location is the cytoplasm. Functionally, molecular chaperone capable of stabilizing a range of proteins. Seems to fulfill an ATP-independent, HSP70-like function in archaeal de novo protein folding. The sequence is that of Prefoldin subunit alpha from Pyrobaculum arsenaticum (strain DSM 13514 / JCM 11321 / PZ6).